The following is a 739-amino-acid chain: DNA ligase (739 aa).

Residues 34-38, 83-84, and glutamate 117 each bind NAD(+); these read DADYD and SL. The active-site N6-AMP-lysine intermediate is the lysine 119. The NAD(+) site is built by arginine 140, glutamate 175, lysine 291, and lysine 315. 4 residues coordinate Zn(2+): cysteine 420, cysteine 423, cysteine 438, and cysteine 444. The 80-residue stretch at 660 to 739 folds into the BRCT domain; that stretch reads ADDSPVAGKT…DGWLDLIGQA (80 aa).

Belongs to the NAD-dependent DNA ligase family. LigA subfamily. It depends on Mg(2+) as a cofactor. Mn(2+) serves as cofactor.

It catalyses the reaction NAD(+) + (deoxyribonucleotide)n-3'-hydroxyl + 5'-phospho-(deoxyribonucleotide)m = (deoxyribonucleotide)n+m + AMP + beta-nicotinamide D-nucleotide.. In terms of biological role, DNA ligase that catalyzes the formation of phosphodiester linkages between 5'-phosphoryl and 3'-hydroxyl groups in double-stranded DNA using NAD as a coenzyme and as the energy source for the reaction. It is essential for DNA replication and repair of damaged DNA. This Ruegeria sp. (strain TM1040) (Silicibacter sp.) protein is DNA ligase.